Here is a 505-residue protein sequence, read N- to C-terminus: Acetyl-coenzyme A carboxylase carboxyl transferase subunit beta, chloroplastic (505 aa).

Over residues 189–205 (ESVSNSKSGSSSIRTGG) the composition is skewed to low complexity. Residues 189–213 (ESVSNSKSGSSSIRTGGNSSDFNRR) form a disordered region. One can recognise a CoA carboxyltransferase N-terminal domain in the interval 228–499 (LWVQCENCYG…NQNSSRALGS (272 aa)). Zn(2+)-binding residues include cysteine 232, cysteine 235, cysteine 251, and cysteine 254. The C4-type zinc-finger motif lies at 232 to 254 (CENCYGLNYKKFVSFKMHICEQC).

Belongs to the AccD/PCCB family. In terms of assembly, acetyl-CoA carboxylase is a heterohexamer composed of biotin carboxyl carrier protein, biotin carboxylase and 2 subunits each of ACCase subunit alpha and ACCase plastid-coded subunit beta (accD). The cofactor is Zn(2+).

It localises to the plastid. The protein localises to the chloroplast stroma. It carries out the reaction N(6)-carboxybiotinyl-L-lysyl-[protein] + acetyl-CoA = N(6)-biotinyl-L-lysyl-[protein] + malonyl-CoA. The protein operates within lipid metabolism; malonyl-CoA biosynthesis; malonyl-CoA from acetyl-CoA: step 1/1. Component of the acetyl coenzyme A carboxylase (ACC) complex. Biotin carboxylase (BC) catalyzes the carboxylation of biotin on its carrier protein (BCCP) and then the CO(2) group is transferred by the transcarboxylase to acetyl-CoA to form malonyl-CoA. This chain is Acetyl-coenzyme A carboxylase carboxyl transferase subunit beta, chloroplastic, found in Calycanthus floridus var. glaucus (Eastern sweetshrub).